Reading from the N-terminus, the 601-residue chain is Glutamine--fructose-6-phosphate aminotransferase [isomerizing] (601 aa).

C2 (nucleophile; for GATase activity) is an active-site residue. One can recognise a Glutamine amidotransferase type-2 domain in the interval 2-218 (CGIVGYIGYD…DHEIVIVKRD (217 aa)). SIS domains follow at residues 284 to 423 (IIND…NHGR) and 453 to 591 (IATD…VDKP). Catalysis depends on K596, which acts as the For Fru-6P isomerization activity.

As to quaternary structure, homodimer.

The protein localises to the cytoplasm. It catalyses the reaction D-fructose 6-phosphate + L-glutamine = D-glucosamine 6-phosphate + L-glutamate. Functionally, catalyzes the first step in hexosamine metabolism, converting fructose-6P into glucosamine-6P using glutamine as a nitrogen source. This Staphylococcus epidermidis (strain ATCC 35984 / DSM 28319 / BCRC 17069 / CCUG 31568 / BM 3577 / RP62A) protein is Glutamine--fructose-6-phosphate aminotransferase [isomerizing].